The primary structure comprises 216 residues: 4-hydroxy-tetrahydrodipicolinate reductase (216 aa).

NAD(+)-binding positions include 9-12, 71-73, and 95-98; these read SGRM, GTT, and AYNF. The active-site Proton donor/acceptor is His-127. His-128 serves as a coordination point for (S)-2,3,4,5-tetrahydrodipicolinate. Residue Lys-131 participates in NAD(+) binding. Catalysis depends on Lys-131, which acts as the Proton donor. A (S)-2,3,4,5-tetrahydrodipicolinate-binding site is contributed by 137-138; it reads GT.

It belongs to the DapB family. In terms of assembly, homotetramer.

It localises to the cytoplasm. It catalyses the reaction (S)-2,3,4,5-tetrahydrodipicolinate + NAD(+) + H2O = (2S,4S)-4-hydroxy-2,3,4,5-tetrahydrodipicolinate + NADH + H(+). The catalysed reaction is (S)-2,3,4,5-tetrahydrodipicolinate + NADP(+) + H2O = (2S,4S)-4-hydroxy-2,3,4,5-tetrahydrodipicolinate + NADPH + H(+). Its pathway is amino-acid biosynthesis; L-lysine biosynthesis via DAP pathway; (S)-tetrahydrodipicolinate from L-aspartate: step 4/4. Is inhibited by high concentrations of NADH. Functionally, catalyzes the conversion of 4-hydroxy-tetrahydrodipicolinate (HTPA) to tetrahydrodipicolinate. Uses NADPH as a reductant with much more efficiency than NADH. This is 4-hydroxy-tetrahydrodipicolinate reductase from Thermotoga maritima (strain ATCC 43589 / DSM 3109 / JCM 10099 / NBRC 100826 / MSB8).